The following is a 340-amino-acid chain: GTP 3',8-cyclase (340 aa).

The Radical SAM core domain maps to Lys8–Asp227. GTP is bound at residue Arg17. Residues Cys24 and Cys28 each contribute to the [4Fe-4S] cluster site. Residue Tyr30 participates in S-adenosyl-L-methionine binding. Cys31 serves as a coordination point for [4Fe-4S] cluster. Arg71 is a GTP binding site. Gly75 lines the S-adenosyl-L-methionine pocket. Residue Thr102 participates in GTP binding. An S-adenosyl-L-methionine-binding site is contributed by Ser126. Lys163 provides a ligand contact to GTP. An S-adenosyl-L-methionine-binding site is contributed by Met197. [4Fe-4S] cluster-binding residues include Cys261 and Cys264. Arg266–Arg268 contacts GTP. Cys278 lines the [4Fe-4S] cluster pocket.

Belongs to the radical SAM superfamily. MoaA family. Monomer and homodimer. Requires [4Fe-4S] cluster as cofactor.

It carries out the reaction GTP + AH2 + S-adenosyl-L-methionine = (8S)-3',8-cyclo-7,8-dihydroguanosine 5'-triphosphate + 5'-deoxyadenosine + L-methionine + A + H(+). It participates in cofactor biosynthesis; molybdopterin biosynthesis. Catalyzes the cyclization of GTP to (8S)-3',8-cyclo-7,8-dihydroguanosine 5'-triphosphate. The chain is GTP 3',8-cyclase from Staphylococcus aureus (strain Mu3 / ATCC 700698).